Consider the following 163-residue polypeptide: 6,7-dimethyl-8-ribityllumazine synthase (163 aa).

5-amino-6-(D-ribitylamino)uracil-binding positions include Phe-27, 58 to 60, and 87 to 89; these read ALE and CVV. Position 92–93 (92–93) interacts with (2S)-2-hydroxy-3-oxobutyl phosphate; the sequence is DT. Catalysis depends on His-95, which acts as the Proton donor. A 5-amino-6-(D-ribitylamino)uracil-binding site is contributed by Asn-120. Arg-134 is a binding site for (2S)-2-hydroxy-3-oxobutyl phosphate.

It belongs to the DMRL synthase family.

It catalyses the reaction (2S)-2-hydroxy-3-oxobutyl phosphate + 5-amino-6-(D-ribitylamino)uracil = 6,7-dimethyl-8-(1-D-ribityl)lumazine + phosphate + 2 H2O + H(+). It functions in the pathway cofactor biosynthesis; riboflavin biosynthesis; riboflavin from 2-hydroxy-3-oxobutyl phosphate and 5-amino-6-(D-ribitylamino)uracil: step 1/2. Functionally, catalyzes the formation of 6,7-dimethyl-8-ribityllumazine by condensation of 5-amino-6-(D-ribitylamino)uracil with 3,4-dihydroxy-2-butanone 4-phosphate. This is the penultimate step in the biosynthesis of riboflavin. The polypeptide is 6,7-dimethyl-8-ribityllumazine synthase (Nitrobacter hamburgensis (strain DSM 10229 / NCIMB 13809 / X14)).